Reading from the N-terminus, the 441-residue chain is Serine carboxypeptidase-like 4 (441 aa).

Residues 1 to 29 (MANNNVYSVLKSLLLLLHLVFLSKQHVDS) form the signal peptide. Disulfide bonds link Cys88-Cys331, Cys252-Cys266, and Cys290-Cys297. N-linked (GlcNAc...) asparagine glycosylation is present at Asn109. Ser184 is an active-site residue. The N-linked (GlcNAc...) asparagine glycan is linked to Asn350. The active site involves Asp366. An N-linked (GlcNAc...) asparagine glycan is attached at Asn382. Residue His419 is part of the active site.

The protein belongs to the peptidase S10 family. As to expression, ubiquitous.

The protein resides in the secreted. In terms of biological role, probable carboxypeptidase. The polypeptide is Serine carboxypeptidase-like 4 (SCPL4) (Arabidopsis thaliana (Mouse-ear cress)).